Here is a 598-residue protein sequence, read N- to C-terminus: MNMYRTHLCNALNLSHVGEEVTLSGWIFRKRDHGGILFIDLRDFYGITQLVLNESSDQELFNYARSIGLESVITVKGTVAARSEDTINTSLSTGHVEVAVHTLVTESAADALPIHVPTSTNHPEDLRLKYRFLDLRCDKVKSNMLLRSAVISEMRKAMESRGFIEVQTPILTASSPEGARDYLVPSRVHAGKFYALPQAPQIFKQLLMASGFDKYFQIAPCFRDEDARADRSPGEFYQLDVEMSFVTQEDVFSVMEPVLRDIFTKFAGNRSVSPTFPRITYKDAMLRYGTDKPDLRNPIIIADVSEVFLRSNFKTFQEGVARGMVVRAIPAPKTSEHPRSFFDSKVEYAKKIGARGLGYITFSTDNTVKGPVAKFLSDTELANIQTLAGVGPGDSVFFVSDAADKAAELSGSVRELLGTELNLIEKDTFKFCWIVDFPYFQYENGKLAFSHNPFSMPQGGLDALSSSNPLDIVAYQYDIVCNGIEISSGAIRNHKLDILYKAFSMVGYSPEAVDAEFGALTRAFRFGVPPHGGIAPGVDRIVMLLADVPNIREIIYFPLTQMGEDLLMGAPSEVNQSHLKELSLALNITPKAAGKTSS.

Glu-177 is an L-aspartate binding site. The segment at Gln-201–Lys-204 is aspartate. Positions 223 and 451 each coordinate L-aspartate. Residue Arg-223–Glu-225 participates in ATP binding. Glu-485 provides a ligand contact to ATP. An L-aspartate-binding site is contributed by Arg-492. Gly-537–Arg-540 contributes to the ATP binding site.

This sequence belongs to the class-II aminoacyl-tRNA synthetase family. Type 1 subfamily. Homodimer.

It localises to the cytoplasm. It catalyses the reaction tRNA(Asx) + L-aspartate + ATP = L-aspartyl-tRNA(Asx) + AMP + diphosphate. Functionally, aspartyl-tRNA synthetase with relaxed tRNA specificity since it is able to aspartylate not only its cognate tRNA(Asp) but also tRNA(Asn). Reaction proceeds in two steps: L-aspartate is first activated by ATP to form Asp-AMP and then transferred to the acceptor end of tRNA(Asp/Asn). The sequence is that of Aspartate--tRNA(Asp/Asn) ligase from Anaplasma phagocytophilum (strain HZ).